A 143-amino-acid chain; its full sequence is ATP synthase subunit b' (143 aa).

The helical transmembrane segment at 6–26 (ATLPLMALQFVLLAIILNAIF) threads the bilayer.

The protein belongs to the ATPase B chain family. In terms of assembly, F-type ATPases have 2 components, F(1) - the catalytic core - and F(0) - the membrane proton channel. F(1) has five subunits: alpha(3), beta(3), gamma(1), delta(1), epsilon(1). F(0) has four main subunits: a(1), b(1), b'(1) and c(10-14). The alpha and beta chains form an alternating ring which encloses part of the gamma chain. F(1) is attached to F(0) by a central stalk formed by the gamma and epsilon chains, while a peripheral stalk is formed by the delta, b and b' chains.

It localises to the cellular thylakoid membrane. Its function is as follows. F(1)F(0) ATP synthase produces ATP from ADP in the presence of a proton or sodium gradient. F-type ATPases consist of two structural domains, F(1) containing the extramembraneous catalytic core and F(0) containing the membrane proton channel, linked together by a central stalk and a peripheral stalk. During catalysis, ATP synthesis in the catalytic domain of F(1) is coupled via a rotary mechanism of the central stalk subunits to proton translocation. Functionally, component of the F(0) channel, it forms part of the peripheral stalk, linking F(1) to F(0). The b'-subunit is a diverged and duplicated form of b found in plants and photosynthetic bacteria. The polypeptide is ATP synthase subunit b' (Crocosphaera subtropica (strain ATCC 51142 / BH68) (Cyanothece sp. (strain ATCC 51142))).